An 881-amino-acid polypeptide reads, in one-letter code: Valine--tRNA ligase (881 aa).

Positions 76–86 match the 'HIGH' region motif; that stretch reads PTVSGSLHIGH. The interval 493-526 is disordered; sequence DSPILPDESQLPVDPSSQAPEGYTEDQRGKPGGF. Residues 608-612 carry the 'KMSKS' region motif; sequence KMSKS. ATP is bound at residue Lys611.

This sequence belongs to the class-I aminoacyl-tRNA synthetase family. ValS type 2 subfamily. As to quaternary structure, monomer.

The protein resides in the cytoplasm. The catalysed reaction is tRNA(Val) + L-valine + ATP = L-valyl-tRNA(Val) + AMP + diphosphate. Functionally, catalyzes the attachment of valine to tRNA(Val). As ValRS can inadvertently accommodate and process structurally similar amino acids such as threonine, to avoid such errors, it has a 'posttransfer' editing activity that hydrolyzes mischarged Thr-tRNA(Val) in a tRNA-dependent manner. The polypeptide is Valine--tRNA ligase (Thermobifida fusca (strain YX)).